A 106-amino-acid polypeptide reads, in one-letter code: Large ribosomal subunit protein uL24 (106 aa).

Belongs to the universal ribosomal protein uL24 family. As to quaternary structure, part of the 50S ribosomal subunit.

Functionally, one of two assembly initiator proteins, it binds directly to the 5'-end of the 23S rRNA, where it nucleates assembly of the 50S subunit. In terms of biological role, one of the proteins that surrounds the polypeptide exit tunnel on the outside of the subunit. This chain is Large ribosomal subunit protein uL24, found in Gluconobacter oxydans (strain 621H) (Gluconobacter suboxydans).